The sequence spans 110 residues: Inner kinetochore subunit mhf1 (110 aa).

This sequence belongs to the TAF9 family. CENP-S/MHF1 subfamily. In terms of assembly, the MHF histone-fold complex is a heterotetramer of 2 mhf1-mhf2 heterodimers. Component of the inner kinetochore constitutive centromere-associated network (CCAN) (also known as central kinetochore Sim4 complex in fission yeast), which is composed of at least cnl2, cnp3, cnp20, fta1, fta2, fta3, fta4, fta6, fta7, mal2, mhf1, mhf2, mis6, mis15, mis17, sim4 and wip1.

It is found in the nucleus. Functionally, component of a FANCM-MHF complex that promotes gene conversion at blocked replication forks, probably by reversal of the stalled fork. FANCM-MHF promotes non-crossover recombination. This is Inner kinetochore subunit mhf1 from Schizosaccharomyces pombe (strain 972 / ATCC 24843) (Fission yeast).